Consider the following 257-residue polypeptide: Probable septum site-determining protein MinC (257 aa).

Residues 123 to 141 (AVEAAAAPAAEPTPEPGAA) show a composition bias toward low complexity. Residues 123 to 144 (AVEAAAAPAAEPTPEPGAASQP) form a disordered region.

The protein belongs to the MinC family. As to quaternary structure, interacts with MinD and FtsZ.

Cell division inhibitor that blocks the formation of polar Z ring septums. Rapidly oscillates between the poles of the cell to destabilize FtsZ filaments that have formed before they mature into polar Z rings. Prevents FtsZ polymerization. The sequence is that of Probable septum site-determining protein MinC from Burkholderia multivorans (strain ATCC 17616 / 249).